Reading from the N-terminus, the 121-residue chain is Small ribosomal subunit protein uS13 (121 aa).

The segment at 94–121 (GLPVRGQNTKNNSRTRKGPRRTVANKKK) is disordered. Residues 106–121 (SRTRKGPRRTVANKKK) are compositionally biased toward basic residues.

This sequence belongs to the universal ribosomal protein uS13 family. As to quaternary structure, part of the 30S ribosomal subunit. Forms a loose heterodimer with protein S19. Forms two bridges to the 50S subunit in the 70S ribosome.

Located at the top of the head of the 30S subunit, it contacts several helices of the 16S rRNA. In the 70S ribosome it contacts the 23S rRNA (bridge B1a) and protein L5 of the 50S subunit (bridge B1b), connecting the 2 subunits; these bridges are implicated in subunit movement. Contacts the tRNAs in the A and P-sites. This is Small ribosomal subunit protein uS13 from Exiguobacterium sibiricum (strain DSM 17290 / CCUG 55495 / CIP 109462 / JCM 13490 / 255-15).